We begin with the raw amino-acid sequence, 433 residues long: Xylose isomerase (433 aa).

Mg(2+)-binding residues include D305 and D307.

It belongs to the xylose isomerase family. In terms of assembly, homotetramer. It depends on Mg(2+) as a cofactor.

It localises to the cytoplasm. It carries out the reaction alpha-D-xylose = alpha-D-xylulofuranose. The protein is Xylose isomerase of Cereibacter sphaeroides (strain KD131 / KCTC 12085) (Rhodobacter sphaeroides).